Reading from the N-terminus, the 1003-residue chain is Anoctamin-2 (1003 aa).

The interval 1 to 68 (MATPGPRDIP…PCGGESTRSS (68 aa)) is disordered. At 1 to 365 (MATPGPRDIP…FGEKIGLYFA (365 aa)) the chain is on the cytoplasmic side. The span at 10-21 (PLLPGSPRRLSP) shows a compositional bias: low complexity. Residues 366 to 386 (WLGLYTSFLIPSSVIGVIVFL) form a helical membrane-spanning segment. At 387-434 (YGCATIEEDIPSREMCDQQNAFTMCPLCDKSCDYWNLSSACGTAQASH) the chain is on the extracellular side. An N-linked (GlcNAc...) asparagine glycan is attached at Asn422. Residues 435-455 (LFDNPATVFFSIFMALWATMF) form a helical membrane-spanning segment. Over 456 to 538 (LENWKRLQMR…KDRFPGYLMN (83 aa)) the chain is Cytoplasmic. Residues 539-559 (FASILFMIALTFSIVFGVIVY) traverse the membrane as a helical segment. At 560-582 (RITTAAALSLNKATRSNVRVTVT) the chain is on the extracellular side. Residues 583–603 (ATAVIINLVVILILDEIYGAV) traverse the membrane as a helical segment. Residues 604-623 (AKWLTKIEVPKTEQTFEERL) lie on the Cytoplasmic side of the membrane. A helical membrane pass occupies residues 624-644 (ILKAFLLKFVNAYSPIFYVAF). Topologically, residues 645-748 (FKGRFVGRPG…YTGLTPEYME (104 aa)) are extracellular. The chain crosses the membrane as a helical span at residues 749–769 (MIIQFGFVTLFVASFPLAPVF). At 770–801 (ALLNNVIEVRLDAKKFVTELRRPDAVRTKDIG) the chain is on the cytoplasmic side. Residues 802 to 822 (IWFDILSGIGKFSVISNAFVI) form a helical membrane-spanning segment. The Extracellular portion of the chain corresponds to 823 to 907 (AITSDFIPRL…QYWFILSARL (85 aa)). Residues Asn841, Asn849, and Asn856 are each glycosylated (N-linked (GlcNAc...) asparagine). The chain crosses the membrane as a helical span at residues 908 to 928 (AFVIIFQNLVMFLSVLVDWMI). The Cytoplasmic portion of the chain corresponds to 929 to 1003 (PDIPTDISDQ…MSSGSQHTNV (75 aa)). The tract at residues 961-1003 (MDEPALRSPGGGDRSRSRAASSAPSGQSQLGSMMSSGSQHTNV) is disordered. Residues 978–1003 (RAASSAPSGQSQLGSMMSSGSQHTNV) are compositionally biased toward low complexity. Residues 1001 to 1003 (TNV) carry the DLG4 binding (PDZ) motif.

The protein belongs to the anoctamin family. Homodimer. Component of a presynaptic protein complex recruited to specialized plasma membrane domains of photoreceptors. Interacts with DLG4 by its C-terminal region. As to expression, retina, especially in the photoreceptor synaptic terminals.

It is found in the cell membrane. The enzyme catalyses chloride(in) = chloride(out). Channel activity is repressed by chloride inhibitors; strongly by niflumic acid (NFA), partially by flufenamic acid (FFA), and only slightly by meclofenamic acid (MFA), 5-Nitro-2-(3-phenylpropylamino)benzoic acid (NPPB), 4-acetamido-4'-isothiocyanato-stilben-2,2'-disulfonate (SITS), and 4,4'-diisothiocyanatostilbene-2,2'-disulfonic acid (DIDS). Its function is as follows. Calcium-activated chloride channel (CaCC) which may play a role in olfactory signal transduction. Odorant molecules bind to odor-sensing receptors (OSRs), leading to an increase in calcium entry that activates CaCC current which amplifies the depolarization of the OSR cells, ANO2 seems to be the underlying chloride channel involved in this process. May mediate light perception amplification in retina. The protein is Anoctamin-2 (ANO2) of Homo sapiens (Human).